Here is a 472-residue protein sequence, read N- to C-terminus: ATP synthase subunit beta (472 aa).

An ATP-binding site is contributed by 156-163; sequence GGAGVGKT.

This sequence belongs to the ATPase alpha/beta chains family. As to quaternary structure, F-type ATPases have 2 components, CF(1) - the catalytic core - and CF(0) - the membrane proton channel. CF(1) has five subunits: alpha(3), beta(3), gamma(1), delta(1), epsilon(1). CF(0) has three main subunits: a(1), b(2) and c(9-12). The alpha and beta chains form an alternating ring which encloses part of the gamma chain. CF(1) is attached to CF(0) by a central stalk formed by the gamma and epsilon chains, while a peripheral stalk is formed by the delta and b chains.

The protein resides in the cell membrane. The catalysed reaction is ATP + H2O + 4 H(+)(in) = ADP + phosphate + 5 H(+)(out). Its function is as follows. Produces ATP from ADP in the presence of a proton gradient across the membrane. The catalytic sites are hosted primarily by the beta subunits. The protein is ATP synthase subunit beta of Symbiobacterium thermophilum (strain DSM 24528 / JCM 14929 / IAM 14863 / T).